A 446-amino-acid polypeptide reads, in one-letter code: Sphingomyelinase phosphodiesterase C (446 aa).

A signal peptide spans 1-26 (MKFRNNLTLYLIFIIVFTIYISLTIS). An N-linked (GlcNAc...) asparagine glycan is attached at Asn6. Residues Asp39 and His41 each coordinate Zn(2+). Cys56 and Cys78 are disulfide-bonded. Asp107 is a Zn(2+) binding site. N-linked (GlcNAc...) asparagine glycans are attached at residues Asn118 and Asn128. Residue Asn148 coordinates Zn(2+). N-linked (GlcNAc...) asparagine glycans are attached at residues Asn178, Asn217, Asn229, and Asn234. Zn(2+) contacts are provided by His247, His287, and His289. Residues Asn342 and Asn357 are each glycosylated (N-linked (GlcNAc...) asparagine). Cys429 and Cys442 are oxidised to a cystine.

This sequence belongs to the acid sphingomyelinase family. Zn(2+) serves as cofactor.

The protein localises to the secreted. The protein is Sphingomyelinase phosphodiesterase C (sgmC) of Dictyostelium discoideum (Social amoeba).